Reading from the N-terminus, the 462-residue chain is Glutamate--tRNA ligase 1 (462 aa).

Residues 8–18 (PSPTGYLHIGG) carry the 'HIGH' region motif. The short motif at 237–241 (KLSKR) is the 'KMSKS' region element. Lys-240 contributes to the ATP binding site.

Belongs to the class-I aminoacyl-tRNA synthetase family. Glutamate--tRNA ligase type 1 subfamily. Monomer.

It localises to the cytoplasm. The catalysed reaction is tRNA(Glu) + L-glutamate + ATP = L-glutamyl-tRNA(Glu) + AMP + diphosphate. In terms of biological role, catalyzes the attachment of glutamate to tRNA(Glu) in a two-step reaction: glutamate is first activated by ATP to form Glu-AMP and then transferred to the acceptor end of tRNA(Glu). This Campylobacter hominis (strain ATCC BAA-381 / DSM 21671 / CCUG 45161 / LMG 19568 / NCTC 13146 / CH001A) protein is Glutamate--tRNA ligase 1.